Reading from the N-terminus, the 956-residue chain is Calsyntenin-3 (956 aa).

An N-terminal signal peptide occupies residues 1–20 (MARMSFLSFLLFCLTSVAHG). Over 21–850 (NKANKHKPWI…PHRNSVVPGA (830 aa)) the chain is Extracellular. Cadherin domains lie at 30–151 (IETE…SPVF) and 152–271 (VERR…IPLF). N-linked (GlcNAc...) asparagine glycans are attached at residues N333, N353, N513, and N743. The chain crosses the membrane as a helical span at residues 851 to 871 (ATVIIMVCVGFLVVMVILGVF). The Cytoplasmic segment spans residues 872-956 (RIRSIHRRGE…EGRDSAPRRY (85 aa)). The segment covering 921–937 (GECEDEEEVVDSPDDTS) has biased composition (acidic residues). A disordered region spans residues 921–956 (GECEDEEEVVDSPDDTSDDQRIIIKKEGRDSAPRRY). Residues 938–956 (DDQRIIIKKEGRDSAPRRY) are compositionally biased toward basic and acidic residues.

The protein belongs to the calsyntenin family. As to quaternary structure, homooligomer and heterooligomer; mediates both homophilic and heterophilc interactions with clstn1 and clstn2 paralogs via cadherin domains. Interacts (via cadherin domains) with both alpha and beta isoforms of neurexins. As to expression, by 48 hours post-fertilization (hpf), widely expressed in the brain, with strong expression in the telencephalon and the midbrain. Not expressed in the optic tectum.

Its subcellular location is the postsynaptic cell membrane. It localises to the endoplasmic reticulum membrane. The protein localises to the golgi apparatus membrane. Functionally, synaptic adhesion molecule. Promotes synapse development by acting as a cell adhesion molecule at the postsynaptic membrane, which associates with presynaptic neurexins. This Danio rerio (Zebrafish) protein is Calsyntenin-3.